A 531-amino-acid chain; its full sequence is DnaJ homolog subfamily C member 21 (531 aa).

One can recognise a J domain in the interval 3-69 (CHYEALGVRR…QERAWYDNHR (67 aa)). 3 disordered regions span residues 279–311 (FGDG…AELY), 327–474 (KAMK…VPAE), and 502–531 (KATG…RKNR). The span at 281 to 311 (DGSDENEMEEHELKDEEDGKDSDEAEDAELY) shows a compositional bias: acidic residues. Phosphoserine occurs at positions 283 and 302. Residues 314 to 338 (LYCPACDKSFKTEKAMKNHEKSKKH) form a C2H2-type 1 zinc finger. Residues 364 to 375 (NPLDDNSEEEME) are compositionally biased toward acidic residues. The residue at position 370 (Ser-370) is a Phosphoserine. The span at 381 to 392 (KLSKKQKKKKQK) shows a compositional bias: basic residues. Over residues 393-403 (PAQNYDDNFNV) the composition is skewed to polar residues. The segment covering 442–453 (KPCDDPKSEAKS) has biased composition (basic and acidic residues). The span at 455 to 464 (PKPKGKKTKD) shows a compositional bias: basic residues. A C2H2-type 2 zinc finger spans residues 482–506 (ISCTTCHSEFPSRNKLFDHLKATGH). Ser-511 bears the Phosphoserine mark. Residues 511 to 522 (SSSSLNSATSSQ) are compositionally biased toward low complexity.

Interacts with HSPA8, PA2G4 and ZNF622. Expressed in brain, placenta, kidney and pancreas.

The protein localises to the cytoplasm. Its subcellular location is the nucleus. The protein resides in the nucleolus. Its function is as follows. May act as a co-chaperone for HSP70. May play a role in ribosomal RNA (rRNA) biogenesis, possibly in the maturation of the 60S subunit. Binds the precursor 45S rRNA. The polypeptide is DnaJ homolog subfamily C member 21 (DNAJC21) (Homo sapiens (Human)).